The sequence spans 413 residues: Gamma-glutamyl phosphate reductase (413 aa).

It belongs to the gamma-glutamyl phosphate reductase family.

The protein resides in the cytoplasm. The catalysed reaction is L-glutamate 5-semialdehyde + phosphate + NADP(+) = L-glutamyl 5-phosphate + NADPH + H(+). It functions in the pathway amino-acid biosynthesis; L-proline biosynthesis; L-glutamate 5-semialdehyde from L-glutamate: step 2/2. Its function is as follows. Catalyzes the NADPH-dependent reduction of L-glutamate 5-phosphate into L-glutamate 5-semialdehyde and phosphate. The product spontaneously undergoes cyclization to form 1-pyrroline-5-carboxylate. This chain is Gamma-glutamyl phosphate reductase, found in Alkaliphilus oremlandii (strain OhILAs) (Clostridium oremlandii (strain OhILAs)).